Reading from the N-terminus, the 1273-residue chain is DNA gyrase subunit A (1273 aa).

Positions 42–931 constitute a Topo IIA-type catalytic domain; that stretch reads LPEVRDGLKP…VDGDVNDEDL (890 aa). Tyr130 (O-(5'-phospho-DNA)-tyrosine intermediate) is an active-site residue. Positions 256–396 constitute a DOD-type homing endonuclease domain; that stretch reads LFGAFISGGF…VQQMLLEFGV (141 aa). The short motif at 958 to 964 is the GyrA-box element; sequence QKRGGKG.

Belongs to the type II topoisomerase GyrA/ParC subunit family. Heterotetramer, composed of two GyrA and two GyrB chains. In the heterotetramer, GyrA contains the active site tyrosine that forms a transient covalent intermediate with the DNA, while GyrB binds cofactors catalyzes ATP hydrolysis. In terms of processing, this protein undergoes a protein self splicing that involves a post-translational excision of the intervening region (intein) followed by peptide ligation.

Its subcellular location is the cytoplasm. The catalysed reaction is ATP-dependent breakage, passage and rejoining of double-stranded DNA.. DNA supercoiling is inhibited by fluoroquinolones; IC(50) 1 ug/ml for sitafloxacin. Its function is as follows. A type II topoisomerase that negatively supercoils closed circular double-stranded (ds) DNA in an ATP-dependent manner to modulate DNA topology and maintain chromosomes in an underwound state. Negative supercoiling favors strand separation, and DNA replication, transcription, recombination and repair, all of which involve strand separation. Also able to catalyze the interconversion of other topological isomers of dsDNA rings, including catenanes and knotted rings. Type II topoisomerases break and join 2 DNA strands simultaneously in an ATP-dependent manner. The chain is DNA gyrase subunit A from Mycobacterium leprae (strain TN).